The sequence spans 127 residues: Large ribosomal subunit protein bL21c (127 aa).

This sequence belongs to the bacterial ribosomal protein bL21 family. In terms of assembly, part of the 50S ribosomal subunit.

The protein localises to the plastid. It is found in the chloroplast. Functionally, this protein binds to 23S rRNA. This Adiantum capillus-veneris (Maidenhair fern) protein is Large ribosomal subunit protein bL21c.